The sequence spans 419 residues: Carboxypeptidase A1 (419 aa).

The signal sequence occupies residues 1-16 (MRGLLVLSVLLGAVFG). A propeptide spans 17 to 110 (KEDFVGHQVL…QEQMFAFRSR (94 aa)) (activation peptide). The region spanning 121–414 (TYHTLEEIYD…LALLTIMEHT (294 aa)) is the Peptidase M14 domain. Zn(2+) contacts are provided by H179 and E182. Substrate-binding positions include 179–182 (HSRE), R237, and 254–255 (NR). Cysteines 248 and 271 form a disulfide. H306 lines the Zn(2+) pocket. Substrate is bound by residues 307 to 308 (SY) and Y358. E380 functions as the Proton donor/acceptor in the catalytic mechanism.

It belongs to the peptidase M14 family. Monomer. May form a complex with proelastase 2. It depends on Zn(2+) as a cofactor.

Its subcellular location is the secreted. It carries out the reaction Release of a C-terminal amino acid, but little or no action with -Asp, -Glu, -Arg, -Lys or -Pro.. The enzyme catalyses leukotriene C4 + H2O = leukotriene F4 + glycine. Inhibited by interaction with the S.magnifica carboxypeptidase inhibitor SmCI. Its function is as follows. Carboxypeptidase that catalyzes the release of a C-terminal amino acid, but has little or no action with -Asp, -Glu, -Arg, -Lys or -Pro. Catalyzes the conversion of leukotriene C4 to leukotriene F4 via the hydrolysis of an amide bond. In Homo sapiens (Human), this protein is Carboxypeptidase A1.